Here is a 39-residue protein sequence, read N- to C-terminus: Conotoxin Cl14.7 (39 aa).

Positions methionine 1–glutamine 15 are excised as a propeptide.

In terms of processing, contains 2 disulfide bonds. Expressed by the venom duct.

Its subcellular location is the secreted. The protein is Conotoxin Cl14.7 of Californiconus californicus (California cone).